The chain runs to 289 residues: Serine/threonine-protein phosphatase PGAM5, mitochondrial (289 aa).

Residues 1–6 (MAFRQA) lie on the Mitochondrial matrix side of the membrane. Residues 7-29 (LQLAACGLAGGSAAVLFSAVAVG) traverse the membrane as a helical segment. Residues 30-289 (KPRAGGDAEP…FMPPDKITRS (260 aa)) are Mitochondrial intermembrane-facing. The interval 32-59 (RAGGDAEPRPAEPPAWAGGARPGPGVWD) is disordered. The span at 45–56 (PAWAGGARPGPG) shows a compositional bias: low complexity. The interval 77–82 (NVESGE) is interaction with KEAP1. Residues S80 and S87 each carry the phosphoserine modification. Residues K116, K144, and K191 each carry the N6-acetyllysine modification.

Belongs to the phosphoglycerate mutase family. BPG-dependent PGAM subfamily. As to quaternary structure, dimer. Forms a ternary complex with NFE2L2 and KEAP1. Interacts with BCL2L1 and MAP3K5. Upon TNF-induced necrosis, forms in complex with RIPK1, RIPK3 and MLKL; the formation of this complex leads to PGAM5 phosphorylation. Isoform 2, but not isoform 1, interacts with DNM1L; this interaction leads to DNM1L dephosphorylation and activation and eventually to mitochondria fragmentation. In terms of processing, both isoform 1 and isoform 2 are phosphorylated by the RIPK1/RIPK3 complex under necrotic conditions. This phosphorylation increases PGAM5 phosphatase activity. Proteolytically cleaved by PARL in response to loss of mitochondrial membrane potential.

The protein resides in the mitochondrion outer membrane. Its subcellular location is the mitochondrion inner membrane. It catalyses the reaction O-phospho-L-seryl-[protein] + H2O = L-seryl-[protein] + phosphate. The enzyme catalyses O-phospho-L-threonyl-[protein] + H2O = L-threonyl-[protein] + phosphate. Functionally, mitochondrial serine/threonine phosphatase that dephosphorylates various substrates and thus plays a role in different biological processes including cellular senescence or mitophagy. Modulates cellular senescence by regulating mitochondrial dynamics. Mechanistically, participates in mitochondrial fission through dephosphorylating DNM1L/DRP1. Additionally, dephosphorylates MFN2 in a stress-sensitive manner and consequently protects it from ubiquitination and degradation to promote mitochondrial network formation. Regulates mitophagy independent of PARKIN by interacting with and dephosphorylating FUNDC1, which interacts with LC3. Regulates anti-oxidative response by forming a tertiary complex with KEAP1 and NRF2. Regulates necroptosis by acting as a RIPK3 target and recruiting the RIPK1-RIPK3-MLKL necrosis 'attack' complex to mitochondria. The polypeptide is Serine/threonine-protein phosphatase PGAM5, mitochondrial (PGAM5) (Homo sapiens (Human)).